The chain runs to 257 residues: Phosphate import ATP-binding protein PstB (257 aa).

The ABC transporter domain occupies I11–I252. Position 43-50 (G43–S50) interacts with ATP.

Belongs to the ABC transporter superfamily. Phosphate importer (TC 3.A.1.7) family. In terms of assembly, the complex is composed of two ATP-binding proteins (PstB), two transmembrane proteins (PstC and PstA) and a solute-binding protein (PstS).

The protein resides in the cell inner membrane. It carries out the reaction phosphate(out) + ATP + H2O = ADP + 2 phosphate(in) + H(+). Functionally, part of the ABC transporter complex PstSACB involved in phosphate import. Responsible for energy coupling to the transport system. This is Phosphate import ATP-binding protein PstB from Salmonella paratyphi A (strain ATCC 9150 / SARB42).